A 171-amino-acid polypeptide reads, in one-letter code: CDP-archaeol synthase (171 aa).

4 helical membrane passes run Val-11 to Phe-31, Val-65 to Ile-85, Leu-129 to Ile-149, and Leu-151 to Tyr-171.

The protein belongs to the CDP-archaeol synthase family. Requires Mg(2+) as cofactor.

It localises to the cell membrane. The enzyme catalyses 2,3-bis-O-(geranylgeranyl)-sn-glycerol 1-phosphate + CTP + H(+) = CDP-2,3-bis-O-(geranylgeranyl)-sn-glycerol + diphosphate. It participates in membrane lipid metabolism; glycerophospholipid metabolism. In terms of biological role, catalyzes the formation of CDP-2,3-bis-(O-geranylgeranyl)-sn-glycerol (CDP-archaeol) from 2,3-bis-(O-geranylgeranyl)-sn-glycerol 1-phosphate (DGGGP) and CTP. This reaction is the third ether-bond-formation step in the biosynthesis of archaeal membrane lipids. The polypeptide is CDP-archaeol synthase (Methanothermobacter thermautotrophicus (strain ATCC 29096 / DSM 1053 / JCM 10044 / NBRC 100330 / Delta H) (Methanobacterium thermoautotrophicum)).